Reading from the N-terminus, the 308-residue chain is GTP cyclohydrolase MptA (308 aa).

Residues 282–308 are disordered; the sequence is NDESIHQHNAHAEREVTLGQLRDELDA.

The protein belongs to the GTP cyclohydrolase IV family. In terms of assembly, homodimer. Fe(2+) is required as a cofactor.

The catalysed reaction is GTP + H2O = 7,8-dihydroneopterin 2',3'-cyclic phosphate + formate + diphosphate + H(+). It participates in cofactor biosynthesis; 5,6,7,8-tetrahydromethanopterin biosynthesis. In terms of biological role, converts GTP to 7,8-dihydro-D-neopterin 2',3'-cyclic phosphate, the first intermediate in the biosynthesis of coenzyme methanopterin. Involved in archaeosine (G(+)) and folate biosynthesis. In Haloferax volcanii (strain ATCC 29605 / DSM 3757 / JCM 8879 / NBRC 14742 / NCIMB 2012 / VKM B-1768 / DS2) (Halobacterium volcanii), this protein is GTP cyclohydrolase MptA.